The primary structure comprises 478 residues: Cytochrome c-552 (478 aa).

The first 26 residues, 1-26 (MTRIKINARRIFSLLIPFFFFTSVHA), serve as a signal peptide directing secretion. His-94 provides a ligand contact to heme c. The heme site is built by Cys-122, Cys-125, and Lys-126. Heme c contacts are provided by Cys-160, Cys-163, His-164, Cys-209, Cys-212, and His-213. Ca(2+)-binding residues include Glu-215, Tyr-216, Lys-261, and Gln-263. Substrate is bound at residue Tyr-216. Residue His-264 participates in substrate binding. Residues His-275, Cys-282, Cys-285, His-286, His-301, Cys-314, Cys-317, His-318, and His-393 each coordinate heme c.

The protein belongs to the cytochrome c-552 family. It depends on Ca(2+) as a cofactor. Heme c is required as a cofactor.

It is found in the periplasm. It catalyses the reaction 6 Fe(III)-[cytochrome c] + NH4(+) + 2 H2O = 6 Fe(II)-[cytochrome c] + nitrite + 8 H(+). It participates in nitrogen metabolism; nitrate reduction (assimilation). Its function is as follows. Catalyzes the reduction of nitrite to ammonia, consuming six electrons in the process. The polypeptide is Cytochrome c-552 (Shigella flexneri).